Here is a 127-residue protein sequence, read N- to C-terminus: Small ribosomal subunit protein uS13 (127 aa).

Positions 92 to 127 (HRQGLPVRGQRTRTNARTRRGRRLTVAGKKKAPSKK) are disordered. Residues 101-127 (QRTRTNARTRRGRRLTVAGKKKAPSKK) show a composition bias toward basic residues.

This sequence belongs to the universal ribosomal protein uS13 family. As to quaternary structure, part of the 30S ribosomal subunit. Forms a loose heterodimer with protein S19. Forms two bridges to the 50S subunit in the 70S ribosome.

Its function is as follows. Located at the top of the head of the 30S subunit, it contacts several helices of the 16S rRNA. In the 70S ribosome it contacts the 23S rRNA (bridge B1a) and protein L5 of the 50S subunit (bridge B1b), connecting the 2 subunits; these bridges are implicated in subunit movement. Contacts the tRNAs in the A and P-sites. The protein is Small ribosomal subunit protein uS13 of Gloeothece citriformis (strain PCC 7424) (Cyanothece sp. (strain PCC 7424)).